Consider the following 95-residue polypeptide: Protein TusB (95 aa).

It belongs to the DsrH/TusB family. In terms of assembly, heterohexamer, formed by a dimer of trimers. The hexameric TusBCD complex contains 2 copies each of TusB, TusC and TusD. The TusBCD complex interacts with TusE.

It is found in the cytoplasm. Its function is as follows. Part of a sulfur-relay system required for 2-thiolation of 5-methylaminomethyl-2-thiouridine (mnm(5)s(2)U) at tRNA wobble positions. This chain is Protein TusB, found in Salmonella agona (strain SL483).